Consider the following 327-residue polypeptide: GTPase Obg (327 aa).

In terms of domain architecture, Obg spans 1–159 (MQFIDQANII…WEVQLELKLL (159 aa)). Residues 160–327 (AEVGIIGLPN…SLLSEVWKRI (168 aa)) form the OBG-type G domain. ATP is bound by residues 166–173 (GLPNAGKS), 191–195 (FTTLI), 213–216 (DIPG), 280–283 (NKME), and 309–311 (SSS). Positions 173 and 193 each coordinate Mg(2+).

The protein belongs to the TRAFAC class OBG-HflX-like GTPase superfamily. OBG GTPase family. Monomer. It depends on Mg(2+) as a cofactor.

It is found in the cytoplasm. In terms of biological role, an essential GTPase which binds GTP, GDP and possibly (p)ppGpp with moderate affinity, with high nucleotide exchange rates and a fairly low GTP hydrolysis rate. Plays a role in control of the cell cycle, stress response, ribosome biogenesis and in those bacteria that undergo differentiation, in morphogenesis control. The sequence is that of GTPase Obg from Prochlorococcus marinus (strain MIT 9215).